A 766-amino-acid polypeptide reads, in one-letter code: Pyrophosphate-energized vacuolar membrane proton pump (766 aa).

At Gly-2–Asp-8 the chain is on the intravacuolar side. The chain crosses the membrane as a helical span at residues Leu-9–Lys-35. Residues Val-36–Gly-84 lie on the Cytoplasmic side of the membrane. A helical transmembrane segment spans residues Ala-85–Val-114. Over Glu-115–Ala-135 the chain is Intravacuolar. A disulfide bond links Cys-124 and Cys-132. A helical membrane pass occupies residues Leu-136–Ile-163. The Cytoplasmic segment spans residues Ala-164–Ala-186. Residues Phe-187–Tyr-216 form a helical membrane-spanning segment. The Intravacuolar portion of the chain corresponds to Gly-217–Asp-219. Residues Trp-220–Tyr-248 form a helical membrane-spanning segment. Over Thr-249–Gly-286 the chain is Cytoplasmic. Lys-250 serves as a coordination point for substrate. Mg(2+) is bound by residues Asp-253, Asp-257, and Asp-283. The helical transmembrane segment at Asp-287 to Ile-312 threads the bilayer. Over Ser-313–Glu-320 the chain is Intravacuolar. A helical membrane pass occupies residues Leu-321–Thr-346. The Cytoplasmic portion of the chain corresponds to Asp-347 to Val-354. Residues Lys-355–Val-382 traverse the membrane as a helical segment. Topologically, residues Ala-383 to Ser-401 are intravacuolar. The helical transmembrane segment at Trp-402–Tyr-425 threads the bilayer. At Thr-426–Asn-447 the chain is on the cytoplasmic side. A helical transmembrane segment spans residues Val-448–Val-472. The Intravacuolar segment spans residues Ser-473–Ala-478. Residues Met-479–Ile-505 form a helical membrane-spanning segment. Residues Ser-506–Asn-534 are Cytoplasmic-facing. Mg(2+) is bound by residues Asp-507 and Asn-534. A helical membrane pass occupies residues Thr-535 to Ala-563. The Intravacuolar segment spans residues Ser-564–Pro-573. Residues Lys-574–Leu-602 form a helical membrane-spanning segment. Over Lys-603–Val-631 the chain is Cytoplasmic. The helical transmembrane segment at Lys-632–Phe-660 threads the bilayer. A topological domain (intravacuolar) is located at residue Gly-661. A helical transmembrane segment spans residues Val-662 to Ala-689. Over Trp-690–Thr-732 the chain is Cytoplasmic. Positions 691 and 727 each coordinate Mg(2+). Position 730 (Lys-730) interacts with substrate. Residues Ser-733–His-758 traverse the membrane as a helical segment. Residues Gly-759–Ile-765 lie on the Intravacuolar side of the membrane.

This sequence belongs to the H(+)-translocating pyrophosphatase (TC 3.A.10) family. K(+)-stimulated subfamily. As to quaternary structure, homodimer.

It localises to the vacuole membrane. The catalysed reaction is diphosphate + H2O + H(+)(in) = 2 phosphate + 2 H(+)(out). Its activity is regulated as follows. Inhibited by excess pyrophosphate as well as excess Mg(2+). Inhibition by ATP, GTP, and CTP is reversed by increasing the Mg(2+) concentration. This suggests that the substrate is a particular metal complex such as MgPPi(2-). Modification of Asp-283 with DCCD abolishes pyrophosphatase activity. Functionally, proton-translocating inorganic pyrophosphatase that contributes to the transtonoplast (from cytosol to vacuole lumen) H(+)-electrochemical potential difference. It establishes a proton gradient of similar and often greater magnitude than the H(+)-ATPase on the same membrane. This Vigna radiata var. radiata (Mung bean) protein is Pyrophosphate-energized vacuolar membrane proton pump.